Here is a 274-residue protein sequence, read N- to C-terminus: Nuclease (274 aa).

The N-terminal stretch at 1–24 (MGICGKLGVAALVALIVGCSPVQS) is a signal peptide. H124 serves as the catalytic Proton acceptor. 7 residues coordinate Mn(2+): N155, D246, E249, D255, F256, Q265, and E269.

Belongs to the DNA/RNA non-specific endonuclease family. In terms of assembly, monomer. Requires Mn(2+) as cofactor. It depends on Mg(2+) as a cofactor. The cofactor is Ca(2+). Co(2+) serves as cofactor. The N-terminus is blocked.

Its subcellular location is the periplasm. Its function is as follows. Catalyzes the degradation of both RNA and DNA; has the potential to act as an endonuclease. This chain is Nuclease (nucA), found in Nostoc sp. (strain PCC 7120 / SAG 25.82 / UTEX 2576).